Reading from the N-terminus, the 672-residue chain is Hydroxyproline O-galactosyltransferase GALT5 (672 aa).

At 1–28 the chain is on the cytoplasmic side; the sequence is MKKPKLSKVEKIDKIDLFSSLWKQRSVR. A helical; Signal-anchor for type II membrane protein membrane pass occupies residues 29 to 49; it reads VIMAIGFLYLVIVSVEIPLVF. At 50-672 the chain is on the lumenal side; the sequence is KSWSSSSVPL…QNKPECCNMR (623 aa). The Galectin domain maps to 191–392; the sequence is KLMELPCGLT…DIDVHSVFVA (202 aa). Asn306 and Asn620 each carry an N-linked (GlcNAc...) asparagine glycan.

Belongs to the glycosyltransferase 31 family. Mn(2+) is required as a cofactor. Expressed in juvenile leaves, stems, cauline leaves and siliques.

The protein localises to the golgi apparatus membrane. It participates in protein modification; protein glycosylation. Functionally, possesses hydroxyproline O-galactosyltransferase activity. Transfers galactose from UDP-galactose to hydroxyproline residues in the arabinogalactan proteins (AGPs). Is specific for AGPs containing non-contiguous peptidyl hydroxyproline residues. Utilizes UDP-galactose solely as sugar donor. The addition of galactose onto the peptidyl hydroxyproline residues in AGP core proteins represents the first committed step in arabinogalactan polysaccharide addition. AGP glycans play essential roles in both vegetative and reproductive plant growth. The protein is Hydroxyproline O-galactosyltransferase GALT5 of Arabidopsis thaliana (Mouse-ear cress).